The following is a 287-amino-acid chain: Nucleotide-binding protein Ppro_0977 (287 aa).

8 to 15 (GMSGSGKS) provides a ligand contact to ATP. 59-62 (DIRG) contacts GTP.

This sequence belongs to the RapZ-like family.

In terms of biological role, displays ATPase and GTPase activities. This is Nucleotide-binding protein Ppro_0977 from Pelobacter propionicus (strain DSM 2379 / NBRC 103807 / OttBd1).